The chain runs to 171 residues: Translationally-controlled tumor protein homolog (171 aa).

The 171-residue stretch at 1-171 folds into the TCTP domain; it reads MKIWKDVFTG…FKHGLEEEKF (171 aa).

It belongs to the TCTP family.

Its subcellular location is the cytoplasm. Functionally, involved in calcium binding and microtubule stabilization. This chain is Translationally-controlled tumor protein homolog, found in Anopheles gambiae (African malaria mosquito).